The chain runs to 293 residues: Protease HtpX (293 aa).

Helical transmembrane passes span 4–24 and 34–54; these read IALF…VLSL and GLMI…LLMS. His-139 is a Zn(2+) binding site. Glu-140 is an active-site residue. A Zn(2+)-binding site is contributed by His-143. The next 2 membrane-spanning stretches (helical) occupy residues 158–178 and 193–213; these read VVNT…AGFM and LIYF…ASII. Position 222 (Glu-222) interacts with Zn(2+).

This sequence belongs to the peptidase M48B family. Zn(2+) serves as cofactor.

The protein localises to the cell inner membrane. The sequence is that of Protease HtpX from Escherichia fergusonii (strain ATCC 35469 / DSM 13698 / CCUG 18766 / IAM 14443 / JCM 21226 / LMG 7866 / NBRC 102419 / NCTC 12128 / CDC 0568-73).